A 501-amino-acid chain; its full sequence is Phenylalanine--tRNA ligase alpha subunit (501 aa).

L-phenylalanine contacts are provided by residues Thr344, 383–385, and Phe424; that span reads QID. A Mg(2+)-binding site is contributed by Glu426. Phe449 serves as a coordination point for L-phenylalanine.

Belongs to the class-II aminoacyl-tRNA synthetase family. Phe-tRNA synthetase alpha subunit type 2 subfamily. In terms of assembly, tetramer of two alpha and two beta subunits. It depends on Mg(2+) as a cofactor.

It is found in the cytoplasm. The catalysed reaction is tRNA(Phe) + L-phenylalanine + ATP = L-phenylalanyl-tRNA(Phe) + AMP + diphosphate + H(+). This Thermococcus kodakarensis (strain ATCC BAA-918 / JCM 12380 / KOD1) (Pyrococcus kodakaraensis (strain KOD1)) protein is Phenylalanine--tRNA ligase alpha subunit.